The following is a 387-amino-acid chain: 3-ketoacyl-CoA thiolase (387 aa).

The active-site Acyl-thioester intermediate is Cys-91. Catalysis depends on proton acceptor residues His-343 and Cys-373.

This sequence belongs to the thiolase-like superfamily. Thiolase family. Heterotetramer of two alpha chains (FadB) and two beta chains (FadA).

The protein localises to the cytoplasm. The enzyme catalyses an acyl-CoA + acetyl-CoA = a 3-oxoacyl-CoA + CoA. Its pathway is lipid metabolism; fatty acid beta-oxidation. Its function is as follows. Catalyzes the final step of fatty acid oxidation in which acetyl-CoA is released and the CoA ester of a fatty acid two carbons shorter is formed. This chain is 3-ketoacyl-CoA thiolase, found in Aliivibrio salmonicida (strain LFI1238) (Vibrio salmonicida (strain LFI1238)).